We begin with the raw amino-acid sequence, 37 residues long: Somatostatin-37 (37 aa).

The propeptide occupies 1–2; sequence AL. A disulfide bridge connects residues C26 and C37.

The protein belongs to the somatostatin family.

The protein resides in the secreted. Functionally, somatostatin inhibits the release of somatotropin. The polypeptide is Somatostatin-37 (sst) (Petromyzon marinus (Sea lamprey)).